We begin with the raw amino-acid sequence, 248 residues long: Type II secretion system protein N (248 aa).

Residues 1–6 (MKLKSG) lie on the Cytoplasmic side of the membrane. A helical; Signal-anchor for type II membrane protein transmembrane segment spans residues 7-27 (IVTGVALVLAYGLFLASYAPA). Residues 28–248 (RLLTAVPLPA…RTLNFQGRLL (221 aa)) lie on the Periplasmic side of the membrane.

Belongs to the GSP N family.

It localises to the cell inner membrane. In terms of biological role, involved in a type II secretion system (T2SS, formerly general secretion pathway, GSP) for the export of proteins. Required for the translocation of the multiple pectic enzymes. This is Type II secretion system protein N (outN) from Pectobacterium carotovorum subsp. carotovorum (Erwinia carotovora subsp. carotovora).